The following is a 443-amino-acid chain: D(2) dopamine receptor (443 aa).

Over 1–37 (MDPLNLSWYDDDPESRNWSRPFNGSEGKVGKPHYNYY) the chain is Extracellular. N-linked (GlcNAc...) asparagine glycans are attached at residues Asn-5, Asn-17, and Asn-23. A helical membrane pass occupies residues 38–60 (AMLLTLLIFVIVFGNVLVCMAVS). Residues 61-70 (REKALQTTTN) lie on the Cytoplasmic side of the membrane. Residues 71 to 93 (YLIVSLAVADLLVATLVMPWVVY) form a helical membrane-spanning segment. Over 94–108 (LEVVGEWKFSRIHCD) the chain is Extracellular. Residues Cys-107 and Cys-182 are joined by a disulfide bond. The helical transmembrane segment at 109–130 (IFVTLDVMMCTASILNLCAISI) threads the bilayer. Topologically, residues 131-151 (DRYTAVAMPMLYNTRYSSKRR) are cytoplasmic. A helical membrane pass occupies residues 152-172 (VTVMIAIVWVLSFTISCPLLF). The Extracellular segment spans residues 173-188 (GLNNTDQNECIIANPA). Residues 189 to 213 (FVVYSSVVSFYVPFIVTLLVYIKIY) form a helical membrane-spanning segment. The tract at residues 211-373 (KIYIVLRRRR…SQQKEKKATQ (163 aa)) is interaction with PPP1R9B. The Cytoplasmic segment spans residues 214 to 373 (IVLRRRRKRV…SQQKEKKATQ (160 aa)). The disordered stretch occupies residues 282-331 (EMLSSTSPPERTRYSPIPPSHHQLTLPDPSHHGLHSTANSPVKPEKNGHA). Residues 374-395 (MLAIVLGVFIICWLPFFITHIL) form a helical membrane-spanning segment. At 396–409 (NIHCDCNIPPVLYS) the chain is on the extracellular side. Cysteines 399 and 401 form a disulfide. Residues 410-431 (AFTWLGYVNSAVNPIIYTTFNV) traverse the membrane as a helical segment. The Cytoplasmic portion of the chain corresponds to 432–443 (EFRKAFMKILHC). A lipid anchor (S-palmitoyl cysteine) is attached at Cys-443.

The protein belongs to the G-protein coupled receptor 1 family. In terms of assembly, forms homo- and heterooligomers with DRD4. The interaction with DRD4 may modulate agonist-induced downstream signaling. Interacts with CADPS and CADPS2. Interacts with GPRASP1, PPP1R9B and CLIC6. Interacts with ARRB2. Interacts with HTR2A. Interacts with DRD1. Interacts with KCNA2. In terms of processing, palmitoylated. Palmitoylation which is required for proper localization to the plasma membrane and stability of the receptor could be carried on by ZDHHC4, ZDHHC3 and ZDHHC8.

Its subcellular location is the cell membrane. It localises to the golgi apparatus membrane. Its function is as follows. Dopamine receptor whose activity is mediated by G proteins which inhibit adenylyl cyclase. Positively regulates postnatal regression of retinal hyaloid vessels via suppression of VEGFR2/KDR activity, downstream of OPN5. In Mustela putorius furo (European domestic ferret), this protein is D(2) dopamine receptor (DRD2).